The primary structure comprises 414 residues: ATP-dependent Clp protease ATP-binding subunit ClpX (414 aa).

One can recognise a ClpX-type ZB domain in the interval 1–51 (MADSKTKKKCSFCGRSENEVGFLITGMNGYICDSCATQAYEITQEALGEGR). Zn(2+) contacts are provided by Cys-10, Cys-13, Cys-32, and Cys-35. An ATP-binding site is contributed by 120 to 127 (STGTGKTL).

The protein belongs to the ClpX chaperone family. Component of the ClpX-ClpP complex. Forms a hexameric ring that, in the presence of ATP, binds to fourteen ClpP subunits assembled into a disk-like structure with a central cavity, resembling the structure of eukaryotic proteasomes.

In terms of biological role, ATP-dependent specificity component of the Clp protease. It directs the protease to specific substrates. Can perform chaperone functions in the absence of ClpP. The chain is ATP-dependent Clp protease ATP-binding subunit ClpX from Bacteroides thetaiotaomicron (strain ATCC 29148 / DSM 2079 / JCM 5827 / CCUG 10774 / NCTC 10582 / VPI-5482 / E50).